Consider the following 252-residue polypeptide: Imidazole glycerol phosphate synthase subunit HisF (252 aa).

Catalysis depends on residues aspartate 11 and aspartate 130.

Belongs to the HisA/HisF family. Heterodimer of HisH and HisF.

Its subcellular location is the cytoplasm. The enzyme catalyses 5-[(5-phospho-1-deoxy-D-ribulos-1-ylimino)methylamino]-1-(5-phospho-beta-D-ribosyl)imidazole-4-carboxamide + L-glutamine = D-erythro-1-(imidazol-4-yl)glycerol 3-phosphate + 5-amino-1-(5-phospho-beta-D-ribosyl)imidazole-4-carboxamide + L-glutamate + H(+). It participates in amino-acid biosynthesis; L-histidine biosynthesis; L-histidine from 5-phospho-alpha-D-ribose 1-diphosphate: step 5/9. Functionally, IGPS catalyzes the conversion of PRFAR and glutamine to IGP, AICAR and glutamate. The HisF subunit catalyzes the cyclization activity that produces IGP and AICAR from PRFAR using the ammonia provided by the HisH subunit. In Alkaliphilus metalliredigens (strain QYMF), this protein is Imidazole glycerol phosphate synthase subunit HisF.